The following is a 319-amino-acid chain: Ribosomal protein uL3 glutamine methyltransferase (319 aa).

Belongs to the protein N5-glutamine methyltransferase family. PrmB subfamily.

It catalyses the reaction L-glutaminyl-[ribosomal protein uL3] + S-adenosyl-L-methionine = N(5)-methyl-L-glutaminyl-[ribosomal protein uL3] + S-adenosyl-L-homocysteine + H(+). In terms of biological role, methylates large ribosomal subunit protein uL3 on a specific glutamine residue. The polypeptide is Ribosomal protein uL3 glutamine methyltransferase (Bradyrhizobium diazoefficiens (strain JCM 10833 / BCRC 13528 / IAM 13628 / NBRC 14792 / USDA 110)).